A 417-amino-acid chain; its full sequence is NADH-quinone oxidoreductase subunit D (417 aa).

Belongs to the complex I 49 kDa subunit family. As to quaternary structure, NDH-1 is composed of 14 different subunits. Subunits NuoB, C, D, E, F, and G constitute the peripheral sector of the complex.

It is found in the cell inner membrane. It catalyses the reaction a quinone + NADH + 5 H(+)(in) = a quinol + NAD(+) + 4 H(+)(out). NDH-1 shuttles electrons from NADH, via FMN and iron-sulfur (Fe-S) centers, to quinones in the respiratory chain. The immediate electron acceptor for the enzyme in this species is believed to be ubiquinone. Couples the redox reaction to proton translocation (for every two electrons transferred, four hydrogen ions are translocated across the cytoplasmic membrane), and thus conserves the redox energy in a proton gradient. This Nitrosospira multiformis (strain ATCC 25196 / NCIMB 11849 / C 71) protein is NADH-quinone oxidoreductase subunit D.